A 118-amino-acid polypeptide reads, in one-letter code: Basic leucine zipper transcriptional factor ATF-like 3 (118 aa).

Residues 1-69 (MSQGPPAVSV…HESLEQENSV (69 aa)) form a disordered region. Residues Ser2 and Ser24 each carry the phosphoserine modification. Residues 28–91 (DDRKVRRREK…RHLSEVLKEH (64 aa)) enclose the bZIP domain. The basic motif stretch occupies residues 30-55 (RKVRRREKNRVAAQRSRKKQTQKADK). Over residues 51-69 (QKADKLHEEHESLEQENSV) the composition is skewed to basic and acidic residues. The tract at residues 56–84 (LHEEHESLEQENSVLRREISKLKEELRHL) is leucine-zipper.

This sequence belongs to the bZIP family. In terms of assembly, heterodimer; heterodimerizes with JUN family proteins. Interacts with JUN. In terms of tissue distribution, highly expressed in CD8-alpha(+) classical dendritic cells (cDCs), with low to absent expression in other immune cells and non-immune tissues.

It localises to the nucleus. In terms of biological role, AP-1 family transcription factor that controls the differentiation of CD8(+) thymic conventional dendritic cells in the immune system. Acts via the formation of a heterodimer with JUN family proteins that recognizes and binds DNA sequence 5'-TGA[CG]TCA-3' and regulates expression of target genes. Required for development of CD8-alpha(+) classical dendritic cells (cDCs) and related CD103(+) dendritic cells that cross-present antigens to CD8 T-cells and produce interleukin-12 (IL12) in response to pathogens. This is Basic leucine zipper transcriptional factor ATF-like 3 (Batf3) from Mus musculus (Mouse).